Consider the following 864-residue polypeptide: Ribosome biogenesis protein ERB1 (864 aa).

Residues 1–52 are compositionally biased toward basic and acidic residues; sequence MAVDKGRRPVPPERRAQGRKRAEPGDVTIRETRTRPVHTPEPEPELLAKDGI. Disordered regions lie at residues 1-153 and 191-231; these read MAVD…VKEG and ESRN…STED. Acidic residues predominate over residues 53–71; it reads LELEDDDDNDDDDDDDDDD. A compositionally biased stretch (basic and acidic residues) spans 72-83; it reads KSNHHDGAPKNE. The segment covering 100–135 has biased composition (acidic residues); sequence DDGDEDEEEDDEDEDEDASDDEAFDSDDLENWDEEA. 6 WD repeats span residues 509–549, 559–599, 694–732, 735–774, 778–817, and 833–864; these read AHAP…CVAT, ADRS…KTMY, NSAMAVQCVCFHPSRPWLFVATQRYVRVYDLVQQSLVKT, PGVRWISSLDVHPSGDHVIIGSYDRRVLWFDLDLSERPYK, YHSRAVRAVAYHPRFPLFASAADDGTVHVYHGTVYSDLLQ, and QDALGVLSIAWHPTLPWLVSAGADGDARLWTP.

The protein belongs to the WD repeat BOP1/ERB1 family. In terms of assembly, component of the NOP7 complex, composed of ERB1, NOP7 and YTM1. The complex is held together by ERB1, which interacts with NOP7 via its N-terminal domain and with YTM1 via a high-affinity interaction between the seven-bladed beta-propeller domains of the 2 proteins. The NOP7 complex associates with the 66S pre-ribosome.

Its subcellular location is the nucleus. It is found in the nucleolus. The protein localises to the nucleoplasm. In terms of biological role, component of the NOP7 complex, which is required for maturation of the 25S and 5.8S ribosomal RNAs and formation of the 60S ribosome. The chain is Ribosome biogenesis protein ERB1 from Malassezia globosa (strain ATCC MYA-4612 / CBS 7966) (Dandruff-associated fungus).